Here is a 286-residue protein sequence, read N- to C-terminus: Pantothenate synthetase (286 aa).

32-39 contributes to the ATP binding site; that stretch reads MGALHEGH. The active-site Proton donor is the histidine 39. Position 63 (glutamine 63) interacts with (R)-pantoate. Residue glutamine 63 coordinates beta-alanine. Residue 149–152 coordinates ATP; it reads GEKD. Position 155 (glutamine 155) interacts with (R)-pantoate. ATP contacts are provided by residues leucine 178 and 186–189; that span reads SSSR.

This sequence belongs to the pantothenate synthetase family. In terms of assembly, homodimer.

It localises to the cytoplasm. It catalyses the reaction (R)-pantoate + beta-alanine + ATP = (R)-pantothenate + AMP + diphosphate + H(+). It functions in the pathway cofactor biosynthesis; (R)-pantothenate biosynthesis; (R)-pantothenate from (R)-pantoate and beta-alanine: step 1/1. Its function is as follows. Catalyzes the condensation of pantoate with beta-alanine in an ATP-dependent reaction via a pantoyl-adenylate intermediate. The chain is Pantothenate synthetase from Bartonella quintana (strain Toulouse) (Rochalimaea quintana).